The following is a 214-amino-acid chain: Octanoyltransferase (214 aa).

Residues 32–207 (EDTLDEIWLV…NLLALLNHPP (176 aa)) form the BPL/LPL catalytic domain. Substrate-binding positions include 71-78 (RGGQVTYH), 138-140 (SLG), and 151-153 (GLA). Cysteine 169 serves as the catalytic Acyl-thioester intermediate.

This sequence belongs to the LipB family.

Its subcellular location is the cytoplasm. The enzyme catalyses octanoyl-[ACP] + L-lysyl-[protein] = N(6)-octanoyl-L-lysyl-[protein] + holo-[ACP] + H(+). It functions in the pathway protein modification; protein lipoylation via endogenous pathway; protein N(6)-(lipoyl)lysine from octanoyl-[acyl-carrier-protein]: step 1/2. In terms of biological role, catalyzes the transfer of endogenously produced octanoic acid from octanoyl-acyl-carrier-protein onto the lipoyl domains of lipoate-dependent enzymes. Lipoyl-ACP can also act as a substrate although octanoyl-ACP is likely to be the physiological substrate. This Klebsiella pneumoniae subsp. pneumoniae (strain ATCC 700721 / MGH 78578) protein is Octanoyltransferase.